A 241-amino-acid chain; its full sequence is Small ribosomal subunit protein uS3 (241 aa).

Positions 39–109 constitute a KH type-2 domain; the sequence is IRQHVEKNLS…QIRINVIEVS (71 aa). The interval 215 to 241 is disordered; that stretch reads EQAMAAPAPTPRKKRRPQQFEDRSNEE. The span at 232–241 shows a compositional bias: basic and acidic residues; sequence QQFEDRSNEE.

Belongs to the universal ribosomal protein uS3 family. Part of the 30S ribosomal subunit. Forms a tight complex with proteins S10 and S14.

Functionally, binds the lower part of the 30S subunit head. Binds mRNA in the 70S ribosome, positioning it for translation. The chain is Small ribosomal subunit protein uS3 from Crocosphaera subtropica (strain ATCC 51142 / BH68) (Cyanothece sp. (strain ATCC 51142)).